We begin with the raw amino-acid sequence, 453 residues long: Aldehyde dehydrogenase, dimeric NADP-preferring (453 aa).

Ser-2 carries the post-translational modification N-acetylserine. Residue Lys-178 is modified to N6-acetyllysine. Residue 188–193 (GSTAVG) coordinates NAD(+). Lys-194 is subject to N6-acetyllysine. Residues Glu-210 and Cys-244 contribute to the active site.

It belongs to the aldehyde dehydrogenase family. In terms of assembly, homodimer. Constitutively expressed in cornea, stomach, skin, bladder and lungs. Lowest expression levels in lungs and bladder.

Its subcellular location is the cytoplasm. It catalyses the reaction an aldehyde + NAD(+) + H2O = a carboxylate + NADH + 2 H(+). It carries out the reaction octanal + NAD(+) + H2O = octanoate + NADH + 2 H(+). ALDHs play a major role in the detoxification of alcohol-derived acetaldehyde. They are involved in the metabolism of corticosteroids, biogenic amines, neurotransmitters, and lipid peroxidation. Oxidizes medium and long chain aldehydes into non-toxic fatty acids. Preferentially oxidizes aromatic aldehyde substrates. Comprises about 50 percent of corneal epithelial soluble proteins. May play a role in preventing corneal damage caused by ultraviolet light. In Mus musculus (Mouse), this protein is Aldehyde dehydrogenase, dimeric NADP-preferring (Aldh3a1).